We begin with the raw amino-acid sequence, 254 residues long: Urease accessory protein UreD (254 aa).

The protein belongs to the UreD family. As to quaternary structure, ureD, UreF and UreG form a complex that acts as a GTP-hydrolysis-dependent molecular chaperone, activating the urease apoprotein by helping to assemble the nickel containing metallocenter of UreC. The UreE protein probably delivers the nickel.

It is found in the cytoplasm. Its function is as follows. Required for maturation of urease via the functional incorporation of the urease nickel metallocenter. In Streptomyces coelicolor (strain ATCC BAA-471 / A3(2) / M145), this protein is Urease accessory protein UreD.